The sequence spans 209 residues: Protein-L-isoaspartate O-methyltransferase (209 aa).

Residue Ser-59 is part of the active site.

It belongs to the methyltransferase superfamily. L-isoaspartyl/D-aspartyl protein methyltransferase family.

It localises to the cytoplasm. It carries out the reaction [protein]-L-isoaspartate + S-adenosyl-L-methionine = [protein]-L-isoaspartate alpha-methyl ester + S-adenosyl-L-homocysteine. In terms of biological role, catalyzes the methyl esterification of L-isoaspartyl residues in peptides and proteins that result from spontaneous decomposition of normal L-aspartyl and L-asparaginyl residues. It plays a role in the repair and/or degradation of damaged proteins. This is Protein-L-isoaspartate O-methyltransferase from Helicobacter pylori (strain G27).